Reading from the N-terminus, the 947-residue chain is MILMNPKTSKILWLLGFLSLLSSFSLEIAAQTTQNINVLFINEVDNEPAAKAVEVVLTYLKKNIRYGLSVQLDSIEANKSDAKVLLEAICNKYATSIEKKQTPHLILDTTKSGIASETVKSFTQALGLPTISASYGQQGDLRQWRDLDEAKQKYLLQVMPPADIIPEAIRSIVIHMNITNAAILYDDSFVMDHKYKSLLQNIQTRHVITAIAKDGKREREEQIEKLRNLDINNFFILGTLQSIRMVLESVKPAYFERNFAWHAITQNEGEISSQRDNATIMFMKPMAYTQYRDRLGLLRTTYNLNEEPQLSSAFYFDLALRSFLTIKEMLQSGAWPKDMEYLNCDDFQGGNTPQRNLDLRDYFTKITEPTSYGTFDLVTQSTQPFNGHSFMKFEMDINVLQIRGGSSVNSKSIGKWISGLNSELIVKDEEQMKNLTADTVYRIFTVVQAPFIMRDETAPKGYKGYCIDLINEIAAIVHFDYTIQEVEDGKFGNMDENGQWNGIVKKLMDKQADIGLGSMSVMAEREIVIDFTVPYYDLVGITIMMQRPSSPSSLFKFLTVLETNVWLCILAAYFFTSFLMWIFDRWSPYSYQNNREKYKDDEEKREFNLKECLWFCMTSLTPQGGGEAPKNLSGRLVAATWWLFGFIIIASYTANLAAFLTVSRLDTPVESLDDLAKQYKILYAPLNGSSAMTYFERMSNIEQMFYEIWKDLSLNDSLTAVERSKLAVWDYPVSDKYTKMWQAMQEAKLPATLDEAVARVRNSTAATGFAFLGDATDIRYLQLTNCDLQVVGEEFSRKPYAIAVQQGSHLKDQFNNAILTLLNKRQLEKLKEKWWKNDEALAKCDKPEDQSDGISIQNIGGVFIVIFVGIGMACITLVFEYWWYRYRKNPRIIDVAEANAERSNAADHPGKLVDGVILGHSGEKFEKSKAALRPRFNQYPATFKPRF.

The first 30 residues, 1 to 30 (MILMNPKTSKILWLLGFLSLLSSFSLEIAA), serve as a signal peptide directing secretion. Residues 31 to 562 (QTTQNINVLF…SLFKFLTVLE (532 aa)) lie on the Extracellular side of the membrane. N-linked (GlcNAc...) asparagine glycosylation is found at Asn78, Asn177, Asn277, and Asn434. A helical transmembrane segment spans residues 563-583 (TNVWLCILAAYFFTSFLMWIF). The Cytoplasmic segment spans residues 584–641 (DRWSPYSYQNNREKYKDDEEKREFNLKECLWFCMTSLTPQGGGEAPKNLSGRLVAATW). A helical transmembrane segment spans residues 642–662 (WLFGFIIIASYTANLAAFLTV). The Extracellular segment spans residues 663 to 858 (SRLDTPVESL…DQSDGISIQN (196 aa)). N-linked (GlcNAc...) asparagine glycans are attached at residues Asn687, Asn715, and Asn762. Residues 859-879 (IGGVFIVIFVGIGMACITLVF) traverse the membrane as a helical segment. Residues 880 to 947 (EYWWYRYRKN…QYPATFKPRF (68 aa)) are Cytoplasmic-facing.

It belongs to the glutamate-gated ion channel (TC 1.A.10.1) family. Interacts with nocte. In terms of tissue distribution, in the antenna, detected in neurons of the arista and also detected in sacculus neurons which innervate the first and second chambers (at protein level). Throughout the main body of the antenna, expressed in neurons which innervate the coeloconic class of olfactory sensilla (at protein level). Expressed in multiple cells of the dorsal organ including the dorsal organ cool cells (at protein level). Detected in femur and retina. Expressed in a subset of femur chordonotal neurons and antennal Johnston's Organ neurons.

The protein resides in the cell membrane. It localises to the cell projection. It is found in the axon. The protein localises to the dendrite. Its subcellular location is the perikaryon. The protein resides in the cilium. Integral part of various neural sensory systems in the antenna that provide the neural basis for the response to environmental changes in temperature (thermosensation), humidity (hygrosensation) and odor detection. Required for odor-evoked electrophysiological responses in multiple neuron classes in the antenna and is likely to function as part of an olfactory receptor complex with Ir76a and Ir76b. Together with Ir21a and Ir93a, mediates the response of the larval dorsal organ cool cells, a trio of cool-responsive neurons, to cooling and is required for cool avoidance behavior. Required in chordonotal organ neurons for behavioral synchronization to low-amplitude temperature cycles and mediates circadian clock resetting by temperature. Together with Ir40a and Ir93a, mediates the response of the hydrosensory sacculus neurons to changes in relative humidity, and is required for dry detection and humidiy preference behavior. This Drosophila melanogaster (Fruit fly) protein is Ionotropic receptor 25a.